The following is a 553-amino-acid chain: Formate--tetrahydrofolate ligase (553 aa).

62–69 serves as a coordination point for ATP; that stretch reads TPAGEGKS.

The protein belongs to the formate--tetrahydrofolate ligase family.

It carries out the reaction (6S)-5,6,7,8-tetrahydrofolate + formate + ATP = (6R)-10-formyltetrahydrofolate + ADP + phosphate. It participates in one-carbon metabolism; tetrahydrofolate interconversion. The polypeptide is Formate--tetrahydrofolate ligase (Limosilactobacillus reuteri subsp. reuteri (strain JCM 1112) (Lactobacillus reuteri)).